We begin with the raw amino-acid sequence, 660 residues long: MKLMIIESPGKIEKLSTILGDGWKIAASVGHVRDLPQKEMGVAAPDFKPSYELTERGEGVVAKLKNLLKQADSVYLATDPDREGEAISWHLQQCLKLSNPLRVTFNEITANAVKASLVAPRTIDVKRVAAQEARRVLDRLVGYMVSPELSRLTGKRLSAGRVQSPAVRLVVEREREIKAFKVTNHFGAMLFFADAKTSGEWSAEWLTKPKFVAEDNPYFMDRDFAAAVAQVKAVVVKSFDESEAKRSPPPPFTTSTMQQAASVTLGVDPKAAMDAAQKLYEQGHITYHRTDNPNVSDESLGDIYAVSVKLGLDIAEKPRKFKAPAGAQVGHPAVTPTHWEVEEAGETSDQKALYKLIRLRAIACQLADARYAVRTVRLEAAQPVGGKNVEFEARGRTLIYQGWLKLIAGDQTEEEDGNEKESSNPIPVCAPGECLDVARGKLLEKKTKPPSHYTQATLVKKLESEGIGRPATYAAIMDNIVSRGYVKTEKKYLFPTETGELIVDSLVGKFEFLDLGFTREIEESLDRIAQGESGYKAVIAKVHDQLNMELSTLQVSATPKHPCQECGKPLRRIPGKNGHFWGCSGYPDCSVTFPDEGGKPGQKKPVEVSNFACVKCGNPLKHLVKKGKGGYDFWGCSGFKEGCKATYEDKKGKPNFEKAK.

Positions 1 to 110 constitute a Toprim domain; it reads MKLMIIESPG…LRVTFNEITA (110 aa). Glu7 and Asp79 together coordinate Mg(2+). The region spanning 124 to 550 is the Topo IA-type catalytic domain; that stretch reads DVKRVAAQEA…KVHDQLNMEL (427 aa). The interval 158 to 163 is interaction with DNA; sequence SAGRVQ. Tyr287 acts as the O-(5'-phospho-DNA)-tyrosine intermediate in catalysis. 2 C4-type zinc fingers span residues 563–589 and 613–643; these read CQEC…YPDC and CVKC…KEGC.

This sequence belongs to the type IA topoisomerase family. As to quaternary structure, monomer. It depends on Mg(2+) as a cofactor.

It carries out the reaction ATP-independent breakage of single-stranded DNA, followed by passage and rejoining.. Functionally, releases the supercoiling and torsional tension of DNA, which is introduced during the DNA replication and transcription, by transiently cleaving and rejoining one strand of the DNA duplex. Introduces a single-strand break via transesterification at a target site in duplex DNA. The scissile phosphodiester is attacked by the catalytic tyrosine of the enzyme, resulting in the formation of a DNA-(5'-phosphotyrosyl)-enzyme intermediate and the expulsion of a 3'-OH DNA strand. The free DNA strand then undergoes passage around the unbroken strand, thus removing DNA supercoils. Finally, in the religation step, the DNA 3'-OH attacks the covalent intermediate to expel the active-site tyrosine and restore the DNA phosphodiester backbone. This chain is DNA topoisomerase I, plasmid, found in Xylella fastidiosa (strain 9a5c).